The primary structure comprises 71 residues: Small ribosomal subunit protein bS18 (71 aa).

This sequence belongs to the bacterial ribosomal protein bS18 family. Part of the 30S ribosomal subunit. Forms a tight heterodimer with protein bS6.

Its function is as follows. Binds as a heterodimer with protein bS6 to the central domain of the 16S rRNA, where it helps stabilize the platform of the 30S subunit. This Synechocystis sp. (strain ATCC 27184 / PCC 6803 / Kazusa) protein is Small ribosomal subunit protein bS18.